The following is a 452-amino-acid chain: Eukaryotic translation initiation factor 4B3 (452 aa).

Alanine 2 is modified (N-acetylalanine). A disordered region spans residues 20-282; the sequence is EEHEAELKQQ…PSGGSRPRLV (263 aa). Polar residues predominate over residues 28-37; it reads QQPSPTNQKS. Positions 98–110 are enriched in basic and acidic residues; it reads PRERSAEELDRSK. Residues 111–122 show a composition bias toward gly residues; it reads LGGGFRSYGGGR. Over residues 126–136 the composition is skewed to low complexity; that stretch reads ESSSSRWGSSR. A compositionally biased stretch (basic and acidic residues) spans 137-156; that stretch reads VSEDGERRGGGFNRDREPSR. Short sequence motifs (nuclear localization signal) lie at residues 172–179 and 215–222; these read AKKPISGN and PRRFVSSN. Over residues 227–243 the composition is skewed to basic and acidic residues; the sequence is DRFEKRGSFESLSRNRD. Residues serine 234, serine 270, and serine 300 each carry the phosphoserine modification. Low complexity predominate over residues 265-280; the sequence is GAANGSPPPSGGSRPR. The disordered stretch occupies residues 349 to 452; it reads AAMEKPNEKS…AKKEETEDKI (104 aa). A compositionally biased stretch (basic and acidic residues) spans 369–386; it reads GRKDEERIERSWRKSTEH. Acidic residues predominate over residues 387–397; the sequence is SEEDAQEEEPA. 2 stretches are compositionally biased toward basic and acidic residues: residues 400-419 and 441-452; these read GAKK…KKEE and EEAKKEETEDKI.

It belongs to the eIF-4 subunit B family. In terms of assembly, homodimer. Nonspherical monomer. mRNA-discriminating component of initiation complexes. Interacts with MAD2. In terms of processing, phosphorylated.

The protein resides in the nucleus. Its function is as follows. Promotes the eIF4F and eIF4A RNA-dependent ATP-hydrolysis activity with different efficiency depending on mRNAs, thus providing mRNA discrimination during initiation of translation. This is Eukaryotic translation initiation factor 4B3 from Arabidopsis thaliana (Mouse-ear cress).